The primary structure comprises 835 residues: Protein translocase subunit SecA 1 (835 aa).

ATP is bound by residues Gln-85, 103–107 (GEGKT), and Asp-492. Residues 788 to 807 (VQGEAVHPSSDGEEAKKKPV) form a disordered region. Zn(2+) contacts are provided by Cys-819, Cys-821, Cys-830, and Cys-831.

It belongs to the SecA family. In terms of assembly, monomer and homodimer. Part of the essential Sec protein translocation apparatus which comprises SecA, SecYEG and auxiliary proteins SecDF. Other proteins may also be involved. Zn(2+) serves as cofactor.

The protein localises to the cell membrane. The protein resides in the cytoplasm. It carries out the reaction ATP + H2O + cellular proteinSide 1 = ADP + phosphate + cellular proteinSide 2.. In terms of biological role, part of the Sec protein translocase complex. Interacts with the SecYEG preprotein conducting channel. Has a central role in coupling the hydrolysis of ATP to the transfer of proteins into and across the cell membrane, serving as an ATP-driven molecular motor driving the stepwise translocation of polypeptide chains across the membrane. In Bacillus thuringiensis (strain Al Hakam), this protein is Protein translocase subunit SecA 1.